A 51-amino-acid chain; its full sequence is Large ribosomal subunit protein bL33 (51 aa).

This sequence belongs to the bacterial ribosomal protein bL33 family.

This chain is Large ribosomal subunit protein bL33, found in Vesicomyosocius okutanii subsp. Calyptogena okutanii (strain HA).